The primary structure comprises 323 residues: Phosphatidylethanolamine:ceramide ethanolaminephosphotransferase (323 aa).

Topologically, residues 1 to 26 are cytoplasmic; sequence MAVPPVEMYSGSFWNRMRKPLPLRTQ. Residues 27–47 traverse the membrane as a helical segment; that stretch reads VIRFTVVFVIVSFILAVALQI. Residues 48-73 lie on the Extracellular side of the membrane; it reads THERMPDPKVTKPLPDLGFEVLHKYP. A helical transmembrane segment spans residues 74–94; that stretch reads FLFSVADCCIGFLNILSVFTA. Topologically, residues 95 to 147 are cytoplasmic; it reads FKLYLLHRHCVGSGEPELPCNIPGVSRFFLSVWLCKENCRIELRNVHTIAWIR. Residues 148 to 168 form a helical membrane-spanning segment; sequence FITSYALLLLSRSVIMVVTSL. At 169-211 the chain is on the extracellular side; the sequence is PNPDDLCQDPPKIENRVKDVILTVLTAGAGSIHCGDLMYSGHT. His210 is an active-site residue. A helical transmembrane segment spans residues 212-232; the sequence is VILTLHLMFHWIYGAMVHWSF. A topological domain (cytoplasmic) is located at residue Arg233. Residues 234 to 254 traverse the membrane as a helical segment; the sequence is PVVTVVAIFGYYCIVASRFHY. Catalysis depends on residues His253 and Asp257. Topologically, residues 255-257 are extracellular; the sequence is TDD. A helical transmembrane segment spans residues 258 to 278; the sequence is VLVAIYLTIATFIAVGHNADG. Residues 279–323 are Cytoplasmic-facing; it reads APWQLQLFIRWLPCCGANSREVTEDGVPVAIVIKNEEMMNFEGKS.

This sequence belongs to the sphingomyelin synthase family.

It is found in the membrane. Its function is as follows. Bidirectional lipid ethanolaminephosphotransferase capable of converting phosphatidylethanolamine (PE) and ceramide to ethanolamine-phosphorylceramide (EPC) and diacylglycerol (DAG) and vice versa. Direction is dependent on the relative concentrations of DAG and ceramide as phosphoethanolamine acceptors. Does not function strictly as a SM synthase. Essential for viability of the pathogenic bloodstream stage of this human protozoan parasite and, consequently, can be considered as potential drug target. The protein is Phosphatidylethanolamine:ceramide ethanolaminephosphotransferase of Trypanosoma brucei brucei (strain 927/4 GUTat10.1).